The chain runs to 456 residues: Histidine--tRNA ligase (456 aa).

Residues M1–R20 are disordered.

The protein belongs to the class-II aminoacyl-tRNA synthetase family. In terms of assembly, homodimer.

It localises to the cytoplasm. The catalysed reaction is tRNA(His) + L-histidine + ATP = L-histidyl-tRNA(His) + AMP + diphosphate + H(+). The polypeptide is Histidine--tRNA ligase (Cupriavidus necator (strain ATCC 17699 / DSM 428 / KCTC 22496 / NCIMB 10442 / H16 / Stanier 337) (Ralstonia eutropha)).